A 1478-amino-acid chain; its full sequence is Adhesion G protein-coupled receptor L2 (1478 aa).

The signal sequence occupies residues 1–25 (MVSSGCRMRSLWFIIIISFLPNTEG). Residues 26-855 (FSRAALPFGL…VHELLLTVIT (830 aa)) are Extracellular-facing. An SUEL-type lectin domain is found at 41 to 130 (SCEGYSIDLR…KYLEVQYECV (90 aa)). Asparagine 99 carries an N-linked (GlcNAc...) asparagine glycan. In terms of domain architecture, Olfactomedin-like spans 139–398 (VCPGTLKAIV…ILRYSLEFGP (260 aa)). A disulfide bridge links cysteine 140 with cysteine 322. The N-linked (GlcNAc...) asparagine glycan is linked to asparagine 335. The segment at 422–458 (VSTTSTTSQKGPMSTTVAGSQEGSKGTKAPPAVSTTK) is disordered. Residues 430 to 445 (QKGPMSTTVAGSQEGS) show a composition bias toward polar residues. 7 N-linked (GlcNAc...) asparagine glycosylation sites follow: asparagine 524, asparagine 633, asparagine 735, asparagine 748, asparagine 791, asparagine 796, and asparagine 817. A GAIN-B domain is found at 663–841 (TRVSMPTENI…AILMAHREIA (179 aa)). 2 cysteine pairs are disulfide-bonded: cysteine 792/cysteine 823 and cysteine 811/cysteine 825. Residues 792–841 (CSFWNYSERTMMGYWSTQGCKLVDTNKTRTTCACSHLTNFAILMAHREIA) are GPS. A helical membrane pass occupies residues 856–876 (WVGIVISLVCLAICIFTFCFF). The Cytoplasmic portion of the chain corresponds to 877–884 (RGLQSDRN). Residues 885 to 905 (TIHKNLCINLFIAEFIFLIGI) form a helical membrane-spanning segment. Residues 906–911 (DKTKYM) lie on the Extracellular side of the membrane. The helical transmembrane segment at 912–932 (IACPIFAGLLHFFFLAAFAWM) threads the bilayer. The Cytoplasmic portion of the chain corresponds to 933-955 (CLEGVQLYLMLVEVFESEYSRKK). The helical transmembrane segment at 956–976 (YYYVAGYLFPATVVGVSAAID) threads the bilayer. Residues 977-994 (YKSYGTEKACWLHVDNYF) are Extracellular-facing. Residues 995-1015 (IWSFIGPVTFIILLNIIFLVI) form a helical membrane-spanning segment. Residues 1016–1056 (TLCKMVKHSNTLKPDSSRLENINNYRVCDGYYNTDLPGSWV) are Cytoplasmic-facing. The chain crosses the membrane as a helical span at residues 1057 to 1077 (LGAFALLCLLGLTWSFGLLFI). Over 1078–1081 (NEET) the chain is Extracellular. The helical transmembrane segment at 1082–1102 (IVMAYLFTIFNAFQGVFIFIF) threads the bilayer. The Cytoplasmic portion of the chain corresponds to 1103–1478 (HCALQKKVRK…EGQMQLVTSL (376 aa)). The segment at 1378 to 1419 (AEDHLQSPNRDSLYTSMPNLRDSPYQESSPDMEEDLSPSRRS) is disordered. Residues 1383-1395 (QSPNRDSLYTSMP) are compositionally biased toward polar residues. Residues serine 1393, serine 1428, and serine 1449 each carry the phosphoserine modification.

Belongs to the G-protein coupled receptor 2 family. Adhesion G-protein coupled receptor (ADGR) subfamily. In terms of assembly, heterodimer of 2 chains generated by proteolytic processing; the large extracellular N-terminal fragment and the membrane-bound C-terminal fragment predominantly remain associated and non-covalently linked. In terms of processing, autoproteolytically processed at the GPS region of the GAIN-B domain; this cleavage modulates receptor activity. In terms of tissue distribution, ubiquitously expressed.

The protein resides in the postsynaptic cell membrane. With respect to regulation, forms a heterodimer of 2 chains generated by proteolytic processing that remain associated through non-covalent interactions mediated by the GAIN-B domain. In the inactivated receptor, the Stachel sequence (also named stalk) is embedded in the GAIN-B domain, where it adopts a beta-strand conformation. On activation, the Stachel moves into the 7 transmembrane region and adopts a twisted hook-shaped configuration that forms contacts within the receptor, leading to coupling of a G-alpha protein, which activates signaling. The cleaved GAIN-B and N-terminal domains can then dissociate from the rest of the receptor. Orphan adhesion G-protein coupled receptor (aGPCR), which mediates synapse specificity. Ligand binding causes a conformation change that triggers signaling via guanine nucleotide-binding proteins (G proteins) and modulates the activity of downstream effectors. Following G-protein coupled receptor activation, associates with cell adhesion molecules that are expressed at the surface of adjacent cells to direct synapse specificity. Specifically mediates the establishment of perforant-path synapses on CA1-region pyramidal neurons in the hippocampus. Localizes to postsynaptic spines in excitatory synapses in the S.lacunosum-moleculare and interacts with presynaptic cell adhesion molecules, such as teneurins, promoting synapse formation. This chain is Adhesion G protein-coupled receptor L2 (ADGRL2), found in Bos taurus (Bovine).